Consider the following 246-residue polypeptide: Mast cell protease 2 (246 aa).

Residues 1 to 19 (MHRPPLPLVLLLLCCRAQA) form the signal peptide. The propeptide at 20–21 (GE) is activation peptide. The Peptidase S1 domain occupies 22–244 (IIGGTESKPH…YRPWIDEVLK (223 aa)). Cys-51 and Cys-67 are joined by a disulfide. Active-site charge relay system residues include His-66 and Asp-109. The N-linked (GlcNAc...) asparagine glycan is linked to Asn-120. 2 cysteine pairs are disulfide-bonded: Cys-143-Cys-208 and Cys-174-Cys-187. Ser-202 functions as the Charge relay system in the catalytic mechanism.

It belongs to the peptidase S1 family. Granzyme subfamily.

It is found in the secreted. The protein resides in the cytoplasmic granule. Functionally, putative mast cell chymase. The polypeptide is Mast cell protease 2 (Ovis aries (Sheep)).